Here is a 55-residue protein sequence, read N- to C-terminus: Large ribosomal subunit protein bL33 (55 aa).

Belongs to the bacterial ribosomal protein bL33 family.

In Proteus mirabilis (strain HI4320), this protein is Large ribosomal subunit protein bL33.